The sequence spans 273 residues: Coiled-coil domain-containing protein 122 (273 aa).

A compositionally biased stretch (basic and acidic residues) spans 1-17 (MSDNKERKSQGFPKEDN). The interval 1–39 (MSDNKERKSQGFPKEDNQDTSSLADAVEKVAKQQQSQAS) is disordered. Coiled coils occupy residues 24 to 116 (ADAV…TAQE) and 179 to 269 (NRIT…RKCI).

The polypeptide is Coiled-coil domain-containing protein 122 (CCDC122) (Homo sapiens (Human)).